The primary structure comprises 493 residues: Cobyric acid synthase (493 aa).

One can recognise a GATase cobBQ-type domain in the interval Asp252 to Trp443. Cys333 serves as the catalytic Nucleophile. Residue His435 is part of the active site.

It belongs to the CobB/CobQ family. CobQ subfamily.

The protein operates within cofactor biosynthesis; adenosylcobalamin biosynthesis. In terms of biological role, catalyzes amidations at positions B, D, E, and G on adenosylcobyrinic A,C-diamide. NH(2) groups are provided by glutamine, and one molecule of ATP is hydrogenolyzed for each amidation. The protein is Cobyric acid synthase of Nostoc sp. (strain PCC 7120 / SAG 25.82 / UTEX 2576).